Reading from the N-terminus, the 466-residue chain is DNA polymerase delta subunit 3 (466 aa).

A2 carries the N-acetylalanine modification. Disordered stretches follow at residues 145-218 (PAES…KEVM) and 255-466 (EQEV…FQRK). Basic and acidic residues-rich tracts occupy residues 205–218 (DANKETKTEAKEVM), 255–265 (EQEVKEEKKVE), and 281–297 (DLKKSSKKAEPVRMQQK). K259 is covalently cross-linked (Glycyl lysine isopeptide (Lys-Gly) (interchain with G-Cter in SUMO); alternate). A Glycyl lysine isopeptide (Lys-Gly) (interchain with G-Cter in SUMO2); alternate cross-link involves residue K259. K262 is covalently cross-linked (Glycyl lysine isopeptide (Lys-Gly) (interchain with G-Cter in SUMO2)). At S308 the chain carries Phosphoserine. The span at 350 to 360 (PSPPPPSPSPE) shows a compositional bias: pro residues. Residues S407 and S409 each carry the phosphoserine modification. The residue at position 411 (T411) is a Phosphothreonine. S413 is subject to Phosphoserine. Basic and acidic residues predominate over residues 432-441 (VKKEPKEERK). K433 is covalently cross-linked (Glycyl lysine isopeptide (Lys-Gly) (interchain with G-Cter in SUMO); alternate). A Glycyl lysine isopeptide (Lys-Gly) (interchain with G-Cter in SUMO2); alternate cross-link involves residue K433. The short motif at 456–463 (QVAITGFF) is the PIP-box element.

Component of both the DNA polymerase delta and DNA polymerase zeta complexes. The tetrameric DNA polymerase delta complex (Pol-delta4), which consists of POLD1/p125, POLD2/p50, POLD3/p66/p68 and POLD4/p12, with POLD1 bearing DNA polymerase and 3' to 5' proofreading exonuclease activities. Within this complex, directly interacts with POLD2. Following stress caused by DNA damaging agents or by replication stress, POLD4 is degraded and Pol-delta4 is converted into a trimeric form of the complex (Pol-delta3), which consists of POLD1, POLD2 and POLD3. Pol-delta3 is the major form occurring at S phase replication sites, as well as DNA damage sites. Directly interacts with PCNA, as do POLD1 and POLD4; this interaction stimulates Pol-delta polymerase activity. Component of the DNA polymerase zeta complex (POLZ), which consists of REV3L, MAD2L2, POLD2 and POLD3, with REV3L bearing DNA polymerase catalytic activity. The DNA polymerase delta complex interacts with POLDIP2; this interaction is probably mediated through direct binding to POLD2. In terms of processing, ubiquitinated, but not targeted to the proteasome. Sumoylated. Sumoylation by SUMO3 may be predominant.

Its subcellular location is the cytoplasm. It is found in the nucleus. Accessory component of both the DNA polymerase delta complex and the DNA polymerase zeta complex. As a component of the trimeric and tetrameric DNA polymerase delta complexes (Pol-delta3 and Pol-delta4, respectively), plays a role in high fidelity genome replication, including in lagging strand synthesis, and repair. Required for optimal Pol-delta activity. Stabilizes the Pol-delta complex and plays a major role in Pol-delta stimulation by PCNA. Pol-delta3 and Pol-delta4 are characterized by the absence or the presence of POLD4. They exhibit differences in catalytic activity. Most notably, Pol-delta3 shows higher proofreading activity than Pol-delta4. Although both Pol-delta3 and Pol-delta4 process Okazaki fragments in vitro, Pol-delta3 may also be better suited to fulfill this task, exhibiting near-absence of strand displacement activity compared to Pol-delta4 and stalling on encounter with the 5'-blocking oligonucleotides. Pol-delta3 idling process may avoid the formation of a gap, while maintaining a nick that can be readily ligated. Along with DNA polymerase kappa, DNA polymerase delta carries out approximately half of nucleotide excision repair (NER) synthesis following UV irradiation. In this context, POLD3, along with PCNA and RFC1-replication factor C complex, is required to recruit POLD1, the catalytic subunit of the polymerase delta complex, to DNA damage sites. Under conditions of DNA replication stress, required for the repair of broken replication forks through break-induced replication (BIR). Involved in the translesion synthesis (TLS) of templates carrying O6-methylguanine or abasic sites performed by Pol-delta4, independently of DNA polymerase zeta (REV3L) or eta (POLH). Facilitates abasic site bypass by DNA polymerase delta by promoting extension from the nucleotide inserted opposite the lesion. Also involved in TLS, as a component of the tetrameric DNA polymerase zeta complex. Along with POLD2, dramatically increases the efficiency and processivity of DNA synthesis of the DNA polymerase zeta complex compared to the minimal zeta complex, consisting of only REV3L and REV7. The polypeptide is DNA polymerase delta subunit 3 (POLD3) (Bos taurus (Bovine)).